The chain runs to 21 residues: thr operon leader peptide (21 aa).

This sequence belongs to the thr operon leader peptide family.

Functionally, this protein is involved in control of the biosynthesis of threonine. The sequence is that of thr operon leader peptide from Salmonella choleraesuis (strain SC-B67).